Consider the following 69-residue polypeptide: Double-strand break reduction protein (69 aa).

In terms of biological role, helps to maintain the integrity of the chromosome by lowering the steady-state level of double strand breaks. This region of DNA acts as an antitoxin to toxin RalR, a DNase, but it seems to be sRNA RalA that has the antitoxin activity and not this putative protein. Therefore the identity of this as a protein-coding gene has been cast into doubt. The sequence is that of Double-strand break reduction protein from Escherichia coli (strain K12).